Consider the following 223-residue polypeptide: Deoxyribose-phosphate aldolase (223 aa).

The Proton donor/acceptor role is filled by D91. K153 (schiff-base intermediate with acetaldehyde) is an active-site residue. Catalysis depends on K182, which acts as the Proton donor/acceptor.

This sequence belongs to the DeoC/FbaB aldolase family. DeoC type 1 subfamily.

It is found in the cytoplasm. The enzyme catalyses 2-deoxy-D-ribose 5-phosphate = D-glyceraldehyde 3-phosphate + acetaldehyde. The protein operates within carbohydrate degradation; 2-deoxy-D-ribose 1-phosphate degradation; D-glyceraldehyde 3-phosphate and acetaldehyde from 2-deoxy-alpha-D-ribose 1-phosphate: step 2/2. In terms of biological role, catalyzes a reversible aldol reaction between acetaldehyde and D-glyceraldehyde 3-phosphate to generate 2-deoxy-D-ribose 5-phosphate. The polypeptide is Deoxyribose-phosphate aldolase (Streptococcus pyogenes serotype M2 (strain MGAS10270)).